Consider the following 427-residue polypeptide: Glutamate-1-semialdehyde 2,1-aminomutase (427 aa).

N6-(pyridoxal phosphate)lysine is present on Lys-265.

Belongs to the class-III pyridoxal-phosphate-dependent aminotransferase family. HemL subfamily. In terms of assembly, homodimer. Pyridoxal 5'-phosphate serves as cofactor.

It localises to the cytoplasm. The catalysed reaction is (S)-4-amino-5-oxopentanoate = 5-aminolevulinate. Its pathway is porphyrin-containing compound metabolism; protoporphyrin-IX biosynthesis; 5-aminolevulinate from L-glutamyl-tRNA(Glu): step 2/2. The chain is Glutamate-1-semialdehyde 2,1-aminomutase from Burkholderia pseudomallei (strain 668).